Consider the following 427-residue polypeptide: Enolase (427 aa).

Gln163 is a (2R)-2-phosphoglycerate binding site. Catalysis depends on Glu205, which acts as the Proton donor. Residues Asp242, Glu285, and Asp312 each contribute to the Mg(2+) site. (2R)-2-phosphoglycerate is bound by residues Lys337, Arg366, Ser367, and Lys388. Lys337 (proton acceptor) is an active-site residue.

This sequence belongs to the enolase family. Mg(2+) is required as a cofactor.

The protein resides in the cytoplasm. The protein localises to the secreted. It is found in the cell surface. The catalysed reaction is (2R)-2-phosphoglycerate = phosphoenolpyruvate + H2O. It functions in the pathway carbohydrate degradation; glycolysis; pyruvate from D-glyceraldehyde 3-phosphate: step 4/5. In terms of biological role, catalyzes the reversible conversion of 2-phosphoglycerate (2-PG) into phosphoenolpyruvate (PEP). It is essential for the degradation of carbohydrates via glycolysis. The protein is Enolase of Burkholderia mallei (strain NCTC 10247).